The primary structure comprises 1035 residues: Isoleucine--tRNA ligase (1035 aa).

The 'HIGH' region signature appears at 48-58; that stretch reads PTANGRPHVGH. Positions 589–593 match the 'KMSKS' region motif; it reads KMSKH. Lys592 serves as a coordination point for ATP.

It belongs to the class-I aminoacyl-tRNA synthetase family. IleS type 2 subfamily. As to quaternary structure, monomer. Zn(2+) serves as cofactor.

It localises to the cytoplasm. The enzyme catalyses tRNA(Ile) + L-isoleucine + ATP = L-isoleucyl-tRNA(Ile) + AMP + diphosphate. Its function is as follows. Catalyzes the attachment of isoleucine to tRNA(Ile). As IleRS can inadvertently accommodate and process structurally similar amino acids such as valine, to avoid such errors it has two additional distinct tRNA(Ile)-dependent editing activities. One activity is designated as 'pretransfer' editing and involves the hydrolysis of activated Val-AMP. The other activity is designated 'posttransfer' editing and involves deacylation of mischarged Val-tRNA(Ile). The protein is Isoleucine--tRNA ligase of Clostridium acetobutylicum (strain ATCC 824 / DSM 792 / JCM 1419 / IAM 19013 / LMG 5710 / NBRC 13948 / NRRL B-527 / VKM B-1787 / 2291 / W).